The primary structure comprises 505 residues: Protein FAM114A2 (505 aa).

Positions 1–65 (MSDKDDIETP…KPSSDLETSK (65 aa)) are disordered. The segment covering 51-63 (KRPETKPSSDLET) has biased composition (basic and acidic residues). Phosphoserine is present on residues Ser-87, Ser-146, and Ser-209. A coiled-coil region spans residues 268–295 (LNSLSGEELETLKVELEQLKETFSLAEF). Residues 342 to 366 (KSLTKPLAENEEGEKQSEAENTEQV) form a disordered region.

This sequence belongs to the FAM114 family.

The chain is Protein FAM114A2 (FAM114A2) from Homo sapiens (Human).